Here is a 227-residue protein sequence, read N- to C-terminus: E3 ubiquitin-protein ligase RNF186 (227 aa).

The RING-type zinc finger occupies 40 to 86; it reads CLVCREPYSCPRLPKLLACQHAFCAICLKLLLCVQDNTWSITCPLCR. The next 2 helical transmembrane spans lie at 158-178 and 180-200; these read HLLL…PGVL and WVLT…CCLP.

In terms of assembly, interacts with BNIP1. In terms of processing, polyubiquitinated. 'Lys-29'-linked autoubiquitination leads to proteasomal degradation.

It localises to the endoplasmic reticulum membrane. The enzyme catalyses S-ubiquitinyl-[E2 ubiquitin-conjugating enzyme]-L-cysteine + [acceptor protein]-L-lysine = [E2 ubiquitin-conjugating enzyme]-L-cysteine + N(6)-ubiquitinyl-[acceptor protein]-L-lysine.. It participates in protein modification; protein ubiquitination. E3 ubiquitin protein ligase that is part of an apoptotic signaling pathway activated by endoplasmic reticulum stress. Stimulates the expression of proteins specific of the unfolded protein response (UPR), ubiquitinates BNIP1 and regulates its localization to the mitochondrion and induces calcium release from the endoplasmic reticulum that ultimately leads to cell apoptosis. Plays a role in the maintenance of intestinal homeostasis and clearance of enteric pathogens. Upon NOD2 stimulation, ubiquitinates the ER stress sensor activating transcription factor 6/ATF6 and promotes the unfolded protein response UPR. Participates in basal level of autophagy maintenance by regulating the ubiquitination of EPHB2 and EPHB3. Upon stimulation by ligand EFNB1, ubiquitinates EPHB2 and further recruits MAP1LC3B for autophagy induction. Controls nutrient sensing by ubiquitinating Sestrin-2/SESN2, which is an intracellular sensor of cytosolic leucine and inhibitor of mTORC1 activity. The protein is E3 ubiquitin-protein ligase RNF186 of Homo sapiens (Human).